The chain runs to 246 residues: DNA repair protein RecO (246 aa).

It belongs to the RecO family.

Involved in DNA repair and RecF pathway recombination. In Marinobacter nauticus (strain ATCC 700491 / DSM 11845 / VT8) (Marinobacter aquaeolei), this protein is DNA repair protein RecO.